The following is a 260-amino-acid chain: Indole-3-glycerol phosphate synthase (260 aa).

Belongs to the TrpC family.

It catalyses the reaction 1-(2-carboxyphenylamino)-1-deoxy-D-ribulose 5-phosphate + H(+) = (1S,2R)-1-C-(indol-3-yl)glycerol 3-phosphate + CO2 + H2O. The protein operates within amino-acid biosynthesis; L-tryptophan biosynthesis; L-tryptophan from chorismate: step 4/5. The protein is Indole-3-glycerol phosphate synthase of Acetivibrio thermocellus (strain ATCC 27405 / DSM 1237 / JCM 9322 / NBRC 103400 / NCIMB 10682 / NRRL B-4536 / VPI 7372) (Clostridium thermocellum).